Consider the following 164-residue polypeptide: MNIVDQQTFRDAMSCMGAAVNIITTDGPAGRAGFTASAVCSVTDTPPTLLVCLNRGASVWPVFNENRTLCVNTLSAGQEPLSNLFGGKTPMEHRFAAARWQTGVTGCPQLEEALVSFDCRISQVVSVGTHDILFCAIEAIHRHTTPYGLVWFDRSYHALMRPAC.

Belongs to the non-flavoprotein flavin reductase family. RutF subfamily.

The enzyme catalyses FMNH2 + NAD(+) = FMN + NADH + 2 H(+). Functionally, catalyzes the reduction of FMN to FMNH2 which is used to reduce pyrimidine by RutA via the Rut pathway. This is FMN reductase (NADH) RutF from Shigella flexneri serotype X (strain 2002017).